Reading from the N-terminus, the 91-residue chain is DNA-directed RNA polymerase subunit omega (91 aa).

This sequence belongs to the RNA polymerase subunit omega family. The RNAP catalytic core consists of 2 alpha, 1 beta, 1 beta' and 1 omega subunit. When a sigma factor is associated with the core the holoenzyme is formed, which can initiate transcription.

The enzyme catalyses RNA(n) + a ribonucleoside 5'-triphosphate = RNA(n+1) + diphosphate. Functionally, promotes RNA polymerase assembly. Latches the N- and C-terminal regions of the beta' subunit thereby facilitating its interaction with the beta and alpha subunits. This Pectobacterium atrosepticum (strain SCRI 1043 / ATCC BAA-672) (Erwinia carotovora subsp. atroseptica) protein is DNA-directed RNA polymerase subunit omega.